We begin with the raw amino-acid sequence, 1597 residues long: Protein STU1 (1597 aa).

Disordered regions lie at residues 220 to 265 (GNSS…PSSS), 519 to 958 (DKVN…RPIH), 1005 to 1154 (DAEA…ELNT), and 1307 to 1332 (SQRP…SSLV). Residues 535–552 (APRESLKEVMRRSRESSV) are compositionally biased toward basic and acidic residues. Over residues 577 to 605 (SSGLVGRSLSGSNLTDRSNRLSSTSTSSR) the composition is skewed to low complexity. Polar residues-rich tracts occupy residues 610-622 (AVSD…QMTR) and 632-645 (PSLT…SLTR). Basic and acidic residues-rich tracts occupy residues 660-673 (GSRE…DQNR) and 694-708 (ESSR…DPSR). Residues 709–726 (ESSLAPSVHSSTAISRES) show a composition bias toward polar residues. Positions 765 to 781 (EETMNEVTTAEATATTA) are enriched in low complexity. Polar residues-rich tracts occupy residues 791-801 (PRESTPPNSSP) and 808-822 (PATQ…TGKS). The segment covering 832–846 (ELSRDLNGESKHLKE) has biased composition (basic and acidic residues). 3 stretches are compositionally biased toward polar residues: residues 918 to 933 (DSQS…QSEP), 1013 to 1025 (TEQT…SDTA), and 1036 to 1045 (NSEQGPSTEP). The span at 1081–1091 (ASDEIETDHTK) shows a compositional bias: basic and acidic residues. The segment covering 1108–1119 (EPMEICDSDNDA) has biased composition (acidic residues). Positions 1122–1139 (NGTNPDTKCQDQQDSTTP) are enriched in polar residues. One copy of the HEAT repeat lies at 1537–1573 (PSYETQLLALITELISDPDPLVRRVTVGLVVRVLRVS).

This sequence belongs to the CLASP family. As to quaternary structure, interacts with microtubules.

The protein resides in the cytoplasm. Its subcellular location is the cytoskeleton. The protein localises to the nucleus. It is found in the spindle. Microtubule binding protein that promotes the stabilization of dynamic microtubules. Required for mitotic spindle formation. The chain is Protein STU1 (STU1) from Yarrowia lipolytica (strain CLIB 122 / E 150) (Yeast).